A 145-amino-acid polypeptide reads, in one-letter code: MYGGDEVSAIVVDLGSHTCKAGYAGEDAPKAVFPSVVGAIDGNGMDIDDAANTTEDAKESDKEKGKRKLYTGSQALNFRRDQMEILSPTKDGIVTDWDMVDNVWDHAFRNCLMIDPTEHPMLLAEPPLNSQQQREKSGFSTFYRC.

The segment at 47–66 (IDDAANTTEDAKESDKEKGK) is disordered. Basic and acidic residues predominate over residues 55-64 (EDAKESDKEK).

This sequence belongs to the actin family. ARP4 subfamily. Expressed in roots, leaves and flowers.

The sequence is that of Actin-related protein 4A (ARP4A) from Arabidopsis thaliana (Mouse-ear cress).